Reading from the N-terminus, the 542-residue chain is Aspartate kinase FUB3 (542 aa).

2 consecutive ACT domains span residues 404-472 (ILSN…VLPD) and 478-542 (LVGA…KSAI).

The protein belongs to the aspartokinase family.

The enzyme catalyses L-aspartate + ATP = 4-phospho-L-aspartate + ADP. The protein operates within mycotoxin biosynthesis. Aspartate kinase; part of the gene cluster that mediates the biosynthesis of fusaric acid, a mycotoxin with low to moderate toxicity to animals and humans, but with high phytotoxic properties. L-aspartate is suggested as fusaric acid amino acid precursor that is activated and further processed to O-acetyl-L-homoserine by cluster enzymes aspartate kinase FUB3 and homoserine O-acetyltransferase FUB5, as well as enzymes of the primary metabolism. The polyketide synthase (PKS) FUB1 generates the triketide trans-2-hexenal which is presumptively released by the hydrolase FUB4 and linked to the NRPS-bound amino acid precursor by NAD(P)-dependent dehydrogenase FUB6. FUB1, FUB4, and the non-canonical NRPS Fub8 may form an enzyme complex. Further processing of the NRPS-bound intermediate might be carried out by FUB6 and the sulfhydrylase FUB7, enabling a spontaneous electrocyclization to close the carbon backbone of fusaric acid. Dihydrofusaric acid is likely to be released via reduction by the thioester reductase (TR) domain of FUB8 whereupon the final oxidation to fusaric acid may (also) be performed by the FMN-dependent dehydrogenase FUB9. This chain is Aspartate kinase FUB3, found in Fusarium oxysporum f. sp. lycopersici (strain 4287 / CBS 123668 / FGSC 9935 / NRRL 34936) (Fusarium vascular wilt of tomato).